Consider the following 189-residue polypeptide: UPF0301 protein Cgl3084/cg3414 (189 aa).

It belongs to the UPF0301 (AlgH) family.

The protein is UPF0301 protein Cgl3084/cg3414 of Corynebacterium glutamicum (strain ATCC 13032 / DSM 20300 / JCM 1318 / BCRC 11384 / CCUG 27702 / LMG 3730 / NBRC 12168 / NCIMB 10025 / NRRL B-2784 / 534).